The primary structure comprises 66 residues: Large ribosomal subunit protein bL31 (66 aa).

Zn(2+) is bound by residues Cys-16, Cys-18, Cys-36, and Cys-39.

The protein belongs to the bacterial ribosomal protein bL31 family. Type A subfamily. As to quaternary structure, part of the 50S ribosomal subunit. Zn(2+) serves as cofactor.

In terms of biological role, binds the 23S rRNA. The chain is Large ribosomal subunit protein bL31 from Nautilia profundicola (strain ATCC BAA-1463 / DSM 18972 / AmH).